The following is a 160-amino-acid chain: Major strawberry allergen Fra a 1.07 (160 aa).

Belongs to the BetVI family. Phosphorylated in vivo. Phosphorylation prevents its activity as ribonuclease. In terms of tissue distribution, highly expressed in roots. Expressed a low levels in ripe red fruits.

Functionally, possesses ribonuclease activity in vitro. This Fragaria ananassa (Strawberry) protein is Major strawberry allergen Fra a 1.07.